A 522-amino-acid polypeptide reads, in one-letter code: BTB/POZ domain-containing protein 16 (522 aa).

A BTB domain is found at 166-222 (INDPAVTRVAFALALKNLYMKEVEMTVDNVLGVLASAHILQFNRLFQKCVNMMMNRL).

This chain is BTB/POZ domain-containing protein 16 (Btbd16), found in Mus musculus (Mouse).